The sequence spans 129 residues: Protein Wnt-6 (129 aa).

Cystine bridges form between Cys-3–Cys-17, Cys-5–Cys-12, Cys-75–Cys-106, Cys-91–Cys-101, and Cys-128–Cys-129. Residue Ser-9 is the site of O-palmitoleoyl serine; by PORCN attachment. The N-linked (GlcNAc...) asparagine glycan is linked to Asn-92.

The protein belongs to the Wnt family. In terms of processing, palmitoleoylation is required for efficient binding to frizzled receptors. Depalmitoleoylation leads to Wnt signaling pathway inhibition. At tailbud: dorsal, punctate; in adult: brain and heart.

The protein localises to the secreted. The protein resides in the extracellular space. It is found in the extracellular matrix. Functionally, ligand for members of the frizzled family of seven transmembrane receptors. Probable developmental protein. May be a signaling molecule which affects the development of discrete regions of tissues. Is likely to signal over only few cell diameters. In Xenopus laevis (African clawed frog), this protein is Protein Wnt-6 (wnt6).